The primary structure comprises 214 residues: 3-isopropylmalate dehydratase small subunit (214 aa).

Belongs to the LeuD family. LeuD type 1 subfamily. Heterodimer of LeuC and LeuD.

It carries out the reaction (2R,3S)-3-isopropylmalate = (2S)-2-isopropylmalate. It participates in amino-acid biosynthesis; L-leucine biosynthesis; L-leucine from 3-methyl-2-oxobutanoate: step 2/4. Its function is as follows. Catalyzes the isomerization between 2-isopropylmalate and 3-isopropylmalate, via the formation of 2-isopropylmaleate. The sequence is that of 3-isopropylmalate dehydratase small subunit from Pseudomonas entomophila (strain L48).